We begin with the raw amino-acid sequence, 363 residues long: MSLKHFIQDALSSWMKQKGPESDIVLSSRIRLARNFEHIRFPTRYSNEEASSIIQQFEDQFSEQEIPGIGKFVLIRMNDAQPLEKRVLVEKHLISPNLTESPFGGCLLSENEEVSVMLNEEDHIRIQCLFPGFQLLEAMKAANQVDDWIEEKVDYAFNEQRGYLTSCPTNVGTGLRASVMMHLPALVLTRQINRIIPAINQLGLVVRGIYGEGSEAVGNIFQISNQITLGKSEQDIVEDLNSVAAQLIEQERSAREAIYQTSKIELEDRVYRSYGVLSNCRMIESKETAKCLSDVRLGIDLGIIKGLSSNILNELMILTQPGFLQQYSGGALRPNERDIRRAALIRERLHLEMNGKRQEDESI.

The region spanning 24 to 254 is the Phosphagen kinase C-terminal domain; the sequence is IVLSSRIRLA…AQLIEQERSA (231 aa). Residue 27–31 coordinates ATP; that stretch reads SSRIR. Residues Arg29, Arg40, and Arg86 each carry the phosphoarginine; by autocatalysis modification. ATP contacts are provided by residues His92, Arg125, and 176–180; that span reads RASVM. At Arg190 the chain carries Phosphoarginine; by autocatalysis. 207 to 212 contributes to the ATP binding site; sequence RGIYGE. Phosphoarginine; by autocatalysis occurs at positions 255, 269, and 272. The short motif at 337 to 342 is the RDXXRA motif of the pArg binding pocket involved in allosteric regulation element; the sequence is RDIRRA. Phosphoarginine; by autocatalysis is present on Arg346.

The protein belongs to the ATP:guanido phosphotransferase family. As to quaternary structure, interacts with CtsR in its autophosphorylated form. Interacts with McsA in nonstressed as well as in heat-stressed cells, whereas strongly interacts with ClpC only in nonstressed cells. Post-translationally, autophosphorylated on Arg residues. Phosphorylation on Arg-40 and Arg-86 are up-regulated upon stress conditions.

It localises to the cytoplasm. The catalysed reaction is L-arginyl-[protein] + ATP = N(omega)-phospho-L-arginyl-[protein] + ADP + H(+). Appears to be allosterically activated by the binding of pArg-containing polypeptides to the pArg-binding pocket localized in the C-terminal domain of McsB. The McsB kinase is inhibited in nonstressed cells by direct interaction with ClpC; upon heat exposure, the interaction of McsB with ClpC is dramatically decreased, leading to McsB release and activation during heat stress. Its kinase activity is counteracted by the protein-arginine-phosphatase YwlE in vivo. Requires McsA for full kinase activity. Functionally, catalyzes the specific phosphorylation of arginine residues in a large number of proteins. Is part of the bacterial stress response system, where it is involved in regulating the global heat shock repressor CtsR; phosphorylates arginine residues in the winged helix-turn-helix domain of CtsR, thereby preventing its binding to DNA and consequently inducing the expression of repressed genes. The transcriptional repressor HrcA, the chaperone GroEL, the unfoldase ClpC, together with several ribosomal subunits, represent other physiological targets of McsB under stress conditions. Protein arginine phosphorylation has a physiologically important role and is involved in the regulation of many critical cellular processes, such as protein homeostasis, motility, competence, and stringent and stress responses, by regulating gene expression and protein activity. Functions as an adapter whose kinase activity is required for ClpCP-mediated degradation of CtsR during heat stress. Is required for the delocalization of competence proteins from the cell poles, probably via a role in the degradation of anchor proteins. This chain is Protein-arginine kinase, found in Bacillus subtilis (strain 168).